The primary structure comprises 126 residues: uncharacterized protein (126 aa).

2 stretches are compositionally biased toward basic residues: residues 21–31 (RKKRKKRKKRR) and 41–83 (RILK…RKRR). The interval 21-83 (RKKRKKRKKR…RSPRKRRKRR (63 aa)) is disordered.

This is an uncharacterized protein from Saccharomyces cerevisiae (strain ATCC 204508 / S288c) (Baker's yeast).